The chain runs to 331 residues: 2-hydroxyacid dehydrogenase homolog (331 aa).

Residues 154-155, 232-234, and aspartate 258 contribute to the NAD(+) site; these read KI and TSR. Arginine 234 is a catalytic residue. Residue glutamate 263 is part of the active site. Catalysis depends on histidine 295, which acts as the Proton donor. Residue 295–298 participates in NAD(+) binding; the sequence is HQAF.

This sequence belongs to the D-isomer specific 2-hydroxyacid dehydrogenase family.

This is 2-hydroxyacid dehydrogenase homolog (ddh) from Haemophilus influenzae (strain ATCC 51907 / DSM 11121 / KW20 / Rd).